The chain runs to 57 residues: Weak toxin CM-1b (57 aa).

Cystine bridges form between Cys-3–Cys-19, Cys-12–Cys-37, Cys-40–Cys-49, and Cys-50–Cys-55.

It belongs to the three-finger toxin family. Short-chain subfamily. Orphan group XX sub-subfamily. Expressed by the venom gland.

Its subcellular location is the secreted. In Hemachatus haemachatus (Rinkhals), this protein is Weak toxin CM-1b.